Consider the following 89-residue polypeptide: Small ribosomal subunit protein uS15 (89 aa).

This sequence belongs to the universal ribosomal protein uS15 family. Part of the 30S ribosomal subunit. Forms a bridge to the 50S subunit in the 70S ribosome, contacting the 23S rRNA.

Its function is as follows. One of the primary rRNA binding proteins, it binds directly to 16S rRNA where it helps nucleate assembly of the platform of the 30S subunit by binding and bridging several RNA helices of the 16S rRNA. In terms of biological role, forms an intersubunit bridge (bridge B4) with the 23S rRNA of the 50S subunit in the ribosome. The chain is Small ribosomal subunit protein uS15 from Nitratidesulfovibrio vulgaris (strain DSM 19637 / Miyazaki F) (Desulfovibrio vulgaris).